Here is an 879-residue protein sequence, read N- to C-terminus: Valine--tRNA ligase (879 aa).

A 'HIGH' region motif is present at residues 43–53 (PNVTGVLHMGH). Positions 534–538 (KMSKS) match the 'KMSKS' region motif. K537 lines the ATP pocket. Positions 807–878 (LGNMIDVEAE…LKESIAALKK (72 aa)) form a coiled coil.

The protein belongs to the class-I aminoacyl-tRNA synthetase family. ValS type 1 subfamily. Monomer.

It is found in the cytoplasm. It carries out the reaction tRNA(Val) + L-valine + ATP = L-valyl-tRNA(Val) + AMP + diphosphate. Catalyzes the attachment of valine to tRNA(Val). As ValRS can inadvertently accommodate and process structurally similar amino acids such as threonine, to avoid such errors, it has a 'posttransfer' editing activity that hydrolyzes mischarged Thr-tRNA(Val) in a tRNA-dependent manner. The chain is Valine--tRNA ligase from Bacteroides thetaiotaomicron (strain ATCC 29148 / DSM 2079 / JCM 5827 / CCUG 10774 / NCTC 10582 / VPI-5482 / E50).